We begin with the raw amino-acid sequence, 127 residues long: Large ribosomal subunit protein bL21 (127 aa).

The protein belongs to the bacterial ribosomal protein bL21 family. In terms of assembly, part of the 50S ribosomal subunit. Contacts protein L20.

Functionally, this protein binds to 23S rRNA in the presence of protein L20. The polypeptide is Large ribosomal subunit protein bL21 (Synechococcus elongatus (strain ATCC 33912 / PCC 7942 / FACHB-805) (Anacystis nidulans R2)).